The chain runs to 178 residues: Cytochrome b6-f complex iron-sulfur subunit (178 aa).

Residues 20–42 traverse the membrane as a helical segment; sequence LLTFGSVTGVALGALYPVANYFI. The Rieske domain maps to 65–161; sequence ASGWLSSHPE…VSVENDNVFV (97 aa). [2Fe-2S] cluster-binding residues include C107, H109, C125, and H128. C112 and C127 are joined by a disulfide.

This sequence belongs to the Rieske iron-sulfur protein family. The 4 large subunits of the cytochrome b6-f complex are cytochrome b6, subunit IV (17 kDa polypeptide, PetD), cytochrome f and the Rieske protein, while the 4 small subunits are PetG, PetL, PetM and PetN. The complex functions as a dimer. [2Fe-2S] cluster serves as cofactor.

Its subcellular location is the cellular thylakoid membrane. The enzyme catalyses 2 oxidized [plastocyanin] + a plastoquinol + 2 H(+)(in) = 2 reduced [plastocyanin] + a plastoquinone + 4 H(+)(out). Its function is as follows. Component of the cytochrome b6-f complex, which mediates electron transfer between photosystem II (PSII) and photosystem I (PSI), cyclic electron flow around PSI, and state transitions. This chain is Cytochrome b6-f complex iron-sulfur subunit, found in Synechococcus sp. (strain CC9605).